Here is a 94-residue protein sequence, read N- to C-terminus: Protein translocase subunit SecE (94 aa).

The segment at 1 to 32 (MTDAVGSIDMPDAQDEAPDSKKSRKGGKRGKK) is disordered. The span at 22–32 (KSRKGGKRGKK) shows a compositional bias: basic residues. Residues 65-85 (TVVIIFVVIMIGLVTLIDYGF) form a helical membrane-spanning segment.

Belongs to the SecE/SEC61-gamma family. In terms of assembly, component of the Sec protein translocase complex. Heterotrimer consisting of SecY, SecE and SecG subunits. The heterotrimers can form oligomers, although 1 heterotrimer is thought to be able to translocate proteins. Interacts with the ribosome. Interacts with SecDF, and other proteins may be involved. Interacts with SecA.

It is found in the cell membrane. Essential subunit of the Sec protein translocation channel SecYEG. Clamps together the 2 halves of SecY. May contact the channel plug during translocation. The protein is Protein translocase subunit SecE of Streptomyces lividans.